Reading from the N-terminus, the 380-residue chain is Cytochrome b (380 aa).

4 helical membrane passes run 34-54 (FGSL…LLAM), 78-99 (WLIR…YMHI), 114-134 (WNTG…GYVL), and 179-199 (FFAL…IHLT). Heme b contacts are provided by His-84 and His-98. The heme b site is built by His-183 and His-197. His-202 is an a ubiquinone binding site. A run of 4 helical transmembrane segments spans residues 227–247 (LKDI…ALFT), 289–309 (LGGV…PLLH), 321–341 (LSQS…WVGS), and 348–368 (FIII…ILLP).

It belongs to the cytochrome b family. As to quaternary structure, the cytochrome bc1 complex contains 11 subunits: 3 respiratory subunits (MT-CYB, CYC1 and UQCRFS1), 2 core proteins (UQCRC1 and UQCRC2) and 6 low-molecular weight proteins (UQCRH/QCR6, UQCRB/QCR7, UQCRQ/QCR8, UQCR10/QCR9, UQCR11/QCR10 and a cleavage product of UQCRFS1). This cytochrome bc1 complex then forms a dimer. The cofactor is heme b.

Its subcellular location is the mitochondrion inner membrane. Functionally, component of the ubiquinol-cytochrome c reductase complex (complex III or cytochrome b-c1 complex) that is part of the mitochondrial respiratory chain. The b-c1 complex mediates electron transfer from ubiquinol to cytochrome c. Contributes to the generation of a proton gradient across the mitochondrial membrane that is then used for ATP synthesis. The chain is Cytochrome b (MT-CYB) from Falco peregrinus (Peregrine falcon).